Reading from the N-terminus, the 798-residue chain is PR domain zinc finger protein 4 (798 aa).

Residues 408-525 form the SET domain; sequence KQLVLRQSIV…PENELLFYYS (118 aa). 5 C2H2-type zinc fingers span residues 586–608, 614–636, 642–664, 670–692, and 698–720; these read WKCSMCPQAFISPSKLHVHFMGH, HKCDFCSKAFSDPSNLRTHLKIH, YRCTLCDKSFTQKAHLESHMVIH, LKCDYCDKLFMRRQDLKQHVLIH, and IKCPKCDKLFLRTNHLKKHLNSH. The C2H2-type 6; degenerate zinc-finger motif lies at 726 to 747; that stretch reads YVCEKCTKAYLTKYHLTRHLKA. Residues 750 to 798 form a disordered region; that stretch reads EPASSSSAQDDEDEDGDSGEDGLPGSMTTEGCRMSSAVYSADESLSAHK. Residues 758-769 show a composition bias toward acidic residues; that stretch reads QDDEDEDGDSGE.

The protein belongs to the class V-like SAM-binding methyltransferase superfamily.

It is found in the nucleus. Its function is as follows. May function as a transcription factor involved in cell differentiation. This is PR domain zinc finger protein 4 (Prdm4) from Rattus norvegicus (Rat).